A 57-amino-acid chain; its full sequence is Large ribosomal subunit protein bL32 (57 aa).

Belongs to the bacterial ribosomal protein bL32 family.

This chain is Large ribosomal subunit protein bL32, found in Corynebacterium glutamicum (strain R).